The primary structure comprises 285 residues: Ribosomal RNA small subunit methyltransferase I (285 aa).

Belongs to the methyltransferase superfamily. RsmI family.

The protein resides in the cytoplasm. It carries out the reaction cytidine(1402) in 16S rRNA + S-adenosyl-L-methionine = 2'-O-methylcytidine(1402) in 16S rRNA + S-adenosyl-L-homocysteine + H(+). Catalyzes the 2'-O-methylation of the ribose of cytidine 1402 (C1402) in 16S rRNA. This is Ribosomal RNA small subunit methyltransferase I from Mycobacterium tuberculosis (strain ATCC 25618 / H37Rv).